The chain runs to 484 residues: Protein DETOXIFICATION 33 (484 aa).

Basic and acidic residues predominate over residues 1-16; it reads MGKDKTLPLLDPREPP. The disordered stretch occupies residues 1–22; sequence MGKDKTLPLLDPREPPELTGTK. 12 helical membrane-spanning segments follow: residues 39–59, 81–101, 122–142, 155–175, 190–210, 218–238, 267–287, 294–314, 338–358, 380–400, 409–429, and 439–459; these read LWELAGPAIFTAISQYSLGAL, VISGLAFGVMLGMGSALETLC, VILFTTALFLLPVYIWAPPIL, AGKFALWMIPQLFAYAANFPI, WISGVVLVIHAVFSWLFILYF, AITLNTSWWLIVIGQLLYILI, ALMLCLEFWYLMVLVVVTGLL, VDAISICMNIEGWTAMISIGF, VIVVSITSTLIGIVCMIVVLA, IAVLLGFTVLLNSLQPVLSGV, LVAYVNIACYYIIGLPAGLVL, and GIWGGMVAGICLQTLILIGII.

It belongs to the multi antimicrobial extrusion (MATE) (TC 2.A.66.1) family.

It is found in the membrane. The protein is Protein DETOXIFICATION 33 of Arabidopsis thaliana (Mouse-ear cress).